The chain runs to 322 residues: Phospho-N-acetylmuramoyl-pentapeptide-transferase (322 aa).

10 consecutive transmembrane segments (helical) span residues 6–26 (ASCIALVSSLTLTVIFLPLLI), 54–74 (TMGGTIFVIAAVISVIWVTAW), 82–102 (VWILVISLLGYGIIGFLDDGI), 122–142 (IIIAVVIVLIASSDHFNFGLY), 145–165 (FAGVVHSVALFVIFIIFWLVG), 176–196 (LDGLATGLSVVAYGTYAYIAF), 200–220 (NFAILAFCMSVIGGLIAFFIF), 227–247 (IFMGDAGSLALGGGLATVSIM), 255–275 (LLVGIVFVCETASVIMQVISF), and 302–322 (VDIVFWIVGLVGSILYLAIWG).

Belongs to the glycosyltransferase 4 family. MraY subfamily. Requires Mg(2+) as cofactor.

The protein localises to the cell membrane. The enzyme catalyses UDP-N-acetyl-alpha-D-muramoyl-L-alanyl-gamma-D-glutamyl-L-lysyl-D-alanyl-D-alanine + di-trans,octa-cis-undecaprenyl phosphate = Mur2Ac(oyl-L-Ala-gamma-D-Glu-L-Lys-D-Ala-D-Ala)-di-trans,octa-cis-undecaprenyl diphosphate + UMP. Its pathway is cell wall biogenesis; peptidoglycan biosynthesis. Catalyzes the initial step of the lipid cycle reactions in the biosynthesis of the cell wall peptidoglycan: transfers peptidoglycan precursor phospho-MurNAc-pentapeptide from UDP-MurNAc-pentapeptide onto the lipid carrier undecaprenyl phosphate, yielding undecaprenyl-pyrophosphoryl-MurNAc-pentapeptide, known as lipid I. The protein is Phospho-N-acetylmuramoyl-pentapeptide-transferase of Lactobacillus helveticus (strain DPC 4571).